Here is a 130-residue protein sequence, read N- to C-terminus: Small ribosomal subunit protein uS8 (130 aa).

It belongs to the universal ribosomal protein uS8 family. Part of the 30S ribosomal subunit. Contacts proteins S5 and S12.

In terms of biological role, one of the primary rRNA binding proteins, it binds directly to 16S rRNA central domain where it helps coordinate assembly of the platform of the 30S subunit. This chain is Small ribosomal subunit protein uS8, found in Ruegeria pomeroyi (strain ATCC 700808 / DSM 15171 / DSS-3) (Silicibacter pomeroyi).